A 317-amino-acid chain; its full sequence is Protein IRX15-LIKE (317 aa).

A helical membrane pass occupies residues 27–47 (LWLLAFVSFFTIAFLLTLLYT).

In terms of tissue distribution, expressed in roots, rosette leaves, stems and siliques. Expressed in the xylem.

It localises to the golgi apparatus membrane. Its function is as follows. Required for xylan biosynthesis, but not directly involved in catalyzing the addition of sugars to the growing polymer. This is Protein IRX15-LIKE (IRX15-L) from Arabidopsis thaliana (Mouse-ear cress).